We begin with the raw amino-acid sequence, 45 residues long: Large ribosomal subunit protein bL34 (45 aa).

The segment covering 1–10 (MTQRTLGGTN) has biased composition (polar residues). The segment at 1–45 (MTQRTLGGTNRKQKRTSGFRARMRKSNGRKVIQARRKKGRHRLSV) is disordered. Residues 11–45 (RKQKRTSGFRARMRKSNGRKVIQARRKKGRHRLSV) show a composition bias toward basic residues.

It belongs to the bacterial ribosomal protein bL34 family.

This Crocosphaera subtropica (strain ATCC 51142 / BH68) (Cyanothece sp. (strain ATCC 51142)) protein is Large ribosomal subunit protein bL34.